The following is a 283-amino-acid chain: Nickel/cobalt efflux system RcnA (283 aa).

Residues Met1–Asn12 lie on the Periplasmic side of the membrane. A helical transmembrane segment spans residues Ala13–His33. The Cytoplasmic segment spans residues Ser34–Gly56. Residues Leu57–Ile77 traverse the membrane as a helical segment. Residues Ser78–Ala86 lie on the Periplasmic side of the membrane. Residues Glu87 to Trp107 form a helical membrane-spanning segment. The Cytoplasmic segment spans residues Arg108–Ile184. The disordered stretch occupies residues Asp127–His162. 2 stretches are compositionally biased toward basic and acidic residues: residues Glu129–His144 and Glu151–His162. The chain crosses the membrane as a helical span at residues Leu185 to Ile205. Residues Cys206–Leu218 lie on the Periplasmic side of the membrane. Residues Val219–Ile239 form a helical membrane-spanning segment. Over Ser240–Tyr260 the chain is Cytoplasmic. A helical membrane pass occupies residues Phe261 to Ile281. At Met282–Arg283 the chain is on the periplasmic side.

It belongs to the NiCoT transporter (TC 2.A.52) family. RcnA subfamily.

The protein resides in the cell inner membrane. Efflux system for nickel and cobalt. The chain is Nickel/cobalt efflux system RcnA (rcnA) from Escherichia coli O157:H7.